We begin with the raw amino-acid sequence, 660 residues long: DNA ligase (660 aa).

Residues 33–37, 82–83, and Glu110 each bind NAD(+); these read DFVYD and SL. Catalysis depends on Lys112, which acts as the N6-AMP-lysine intermediate. Arg133, Glu167, Lys281, and Lys305 together coordinate NAD(+). Residues Cys396, Cys399, Cys412, and Cys417 each coordinate Zn(2+). Residues 583-660 form the BRCT domain; it reads DENRLLAGKK…SFEDIKSYLN (78 aa).

This sequence belongs to the NAD-dependent DNA ligase family. LigA subfamily. Mg(2+) serves as cofactor. It depends on Mn(2+) as a cofactor.

The enzyme catalyses NAD(+) + (deoxyribonucleotide)n-3'-hydroxyl + 5'-phospho-(deoxyribonucleotide)m = (deoxyribonucleotide)n+m + AMP + beta-nicotinamide D-nucleotide.. DNA ligase that catalyzes the formation of phosphodiester linkages between 5'-phosphoryl and 3'-hydroxyl groups in double-stranded DNA using NAD as a coenzyme and as the energy source for the reaction. It is essential for DNA replication and repair of damaged DNA. In Borrelia garinii subsp. bavariensis (strain ATCC BAA-2496 / DSM 23469 / PBi) (Borreliella bavariensis), this protein is DNA ligase.